Consider the following 289-residue polypeptide: Glucosamine-6-phosphate deaminase 1 (289 aa).

Catalysis depends on Asp-72, which acts as the Proton acceptor; for enolization step. Catalysis depends on Asp-141, which acts as the For ring-opening step. The active-site Proton acceptor; for ring-opening step is His-143. Catalysis depends on Glu-148, which acts as the For ring-opening step. Phosphothreonine is present on Thr-161.

It belongs to the glucosamine/galactosamine-6-phosphate isomerase family. As to quaternary structure, homohexamer. In terms of tissue distribution, widely expressed. Detected in brain, liver, kidney, muscle, ovary, testis, spermatids and spermatozoa. In spermatids, located close to the developing acrosome vesicle. In spermatozoa, found close to the acrosomal region.

It is found in the cytoplasm. It catalyses the reaction alpha-D-glucosamine 6-phosphate + H2O = beta-D-fructose 6-phosphate + NH4(+). It functions in the pathway nucleotide-sugar biosynthesis; UDP-N-acetyl-alpha-D-glucosamine biosynthesis; alpha-D-glucosamine 6-phosphate from D-fructose 6-phosphate: step 1/1. Its activity is regulated as follows. Allosterically activated by N-acetylglucosamine-6-phosphate (GlcNAc6P). Catalyzes the reversible conversion of alpha-D-glucosamine 6-phosphate (GlcN-6P) into beta-D-fructose 6-phosphate (Fru-6P) and ammonium ion, a regulatory reaction step in de novo uridine diphosphate-N-acetyl-alpha-D-glucosamine (UDP-GlcNAc) biosynthesis via hexosamine pathway. Deamination is coupled to aldo-keto isomerization mediating the metabolic flux from UDP-GlcNAc toward Fru-6P. At high ammonium level can drive amination and isomerization of Fru-6P toward hexosamines and UDP-GlcNAc synthesis. Has a role in fine tuning the metabolic fluctuations of cytosolic UDP-GlcNAc and their effects on hyaluronan synthesis that occur during tissue remodeling. Seems to trigger calcium oscillations in mammalian eggs. These oscillations serve as the essential trigger for egg activation and early development of the embryo. This chain is Glucosamine-6-phosphate deaminase 1, found in Mus musculus (Mouse).